The primary structure comprises 1008 residues: Probable pre-mRNA-splicing factor ATP-dependent RNA helicase mog-4 (1008 aa).

2 disordered regions span residues 104-146 (SSTK…SESD) and 169-202 (NKKE…REES). Positions 127–137 (KASKPGKSVKP) are enriched in low complexity. Residues 374–538 (IEAVKEHQVL…FDDAPIFRIP (165 aa)) enclose the Helicase ATP-binding domain. Position 387–394 (387–394 (GETGSGKT)) interacts with ATP. The short motif at 485 to 488 (DEAH) is the DEAH box element. The Helicase C-terminal domain occupies 563-737 (TIMQIHLTQP…NVVLMLKSLG (175 aa)). A disordered region spans residues 988–1008 (EDATNKKMPKNKGKSGKDLER).

Belongs to the DEAD box helicase family. DEAH subfamily. DDX16/PRP8 sub-subfamily. As to quaternary structure, interacts with mep-1 and smn-1.

It is found in the nucleus. It carries out the reaction ATP + H2O = ADP + phosphate + H(+). Functionally, ATP-binding RNA helicase involved in pre-mRNA splicing. Operates during embryogenesis. The polypeptide is Probable pre-mRNA-splicing factor ATP-dependent RNA helicase mog-4 (mog-4) (Caenorhabditis elegans).